A 93-amino-acid chain; its full sequence is uncharacterized protein (93 aa).

The protein belongs to the SIMIBI class G3E GTPase family. ArgK/MeaB subfamily.

This is an uncharacterized protein from Streptomyces virginiae (Streptomyces cinnamonensis).